A 387-amino-acid polypeptide reads, in one-letter code: Succinate--CoA ligase [ADP-forming] subunit beta (387 aa).

One can recognise an ATP-grasp domain in the interval 9 to 244 (KHILSKFGVN…YDEEIKEEIE (236 aa)). ATP is bound by residues lysine 46, 53-55 (GRG), glutamate 99, cysteine 102, and glutamate 107. Asparagine 199 and aspartate 213 together coordinate Mg(2+). Substrate-binding positions include asparagine 264 and 321-323 (GIM).

The protein belongs to the succinate/malate CoA ligase beta subunit family. As to quaternary structure, heterotetramer of two alpha and two beta subunits. Mg(2+) serves as cofactor.

It catalyses the reaction succinate + ATP + CoA = succinyl-CoA + ADP + phosphate. The enzyme catalyses GTP + succinate + CoA = succinyl-CoA + GDP + phosphate. It functions in the pathway carbohydrate metabolism; tricarboxylic acid cycle; succinate from succinyl-CoA (ligase route): step 1/1. In terms of biological role, succinyl-CoA synthetase functions in the citric acid cycle (TCA), coupling the hydrolysis of succinyl-CoA to the synthesis of either ATP or GTP and thus represents the only step of substrate-level phosphorylation in the TCA. The beta subunit provides nucleotide specificity of the enzyme and binds the substrate succinate, while the binding sites for coenzyme A and phosphate are found in the alpha subunit. The chain is Succinate--CoA ligase [ADP-forming] subunit beta from Ehrlichia chaffeensis (strain ATCC CRL-10679 / Arkansas).